A 330-amino-acid chain; its full sequence is Putative ADP-ribosyl glycohydrolase L543 (330 aa).

Belongs to the ADP-ribosylglycohydrolase family.

The protein is Putative ADP-ribosyl glycohydrolase L543 of Acanthamoeba polyphaga mimivirus (APMV).